The sequence spans 115 residues: NADH-ubiquinone oxidoreductase chain 3 (115 aa).

3 helical membrane-spanning segments follow: residues 4 to 24 (ALTL…AFWL), 55 to 75 (FFLV…LLPL), and 84 to 104 (LTTM…SLAY).

The protein belongs to the complex I subunit 3 family. In terms of assembly, core subunit of respiratory chain NADH dehydrogenase (Complex I) which is composed of 45 different subunits. Interacts with TMEM186. Interacts with TMEM242.

It is found in the mitochondrion inner membrane. The catalysed reaction is a ubiquinone + NADH + 5 H(+)(in) = a ubiquinol + NAD(+) + 4 H(+)(out). In terms of biological role, core subunit of the mitochondrial membrane respiratory chain NADH dehydrogenase (Complex I) which catalyzes electron transfer from NADH through the respiratory chain, using ubiquinone as an electron acceptor. Essential for the catalytic activity of complex I. This chain is NADH-ubiquinone oxidoreductase chain 3, found in Halichoerus grypus (Gray seal).